A 146-amino-acid polypeptide reads, in one-letter code: D-aminoacyl-tRNA deacylase (146 aa).

Positions 138–139 (GP) match the Gly-cisPro motif, important for rejection of L-amino acids motif.

It belongs to the DTD family. Homodimer.

Its subcellular location is the cytoplasm. The catalysed reaction is glycyl-tRNA(Ala) + H2O = tRNA(Ala) + glycine + H(+). It catalyses the reaction a D-aminoacyl-tRNA + H2O = a tRNA + a D-alpha-amino acid + H(+). Its function is as follows. An aminoacyl-tRNA editing enzyme that deacylates mischarged D-aminoacyl-tRNAs. Also deacylates mischarged glycyl-tRNA(Ala), protecting cells against glycine mischarging by AlaRS. Acts via tRNA-based rather than protein-based catalysis; rejects L-amino acids rather than detecting D-amino acids in the active site. By recycling D-aminoacyl-tRNA to D-amino acids and free tRNA molecules, this enzyme counteracts the toxicity associated with the formation of D-aminoacyl-tRNA entities in vivo and helps enforce protein L-homochirality. The chain is D-aminoacyl-tRNA deacylase from Stenotrophomonas maltophilia (strain K279a).